Consider the following 656-residue polypeptide: Phosphatidylinositol 4,5-bisphosphate-binding protein SLM2 (656 aa).

Positions 445–555 constitute a PH domain; the sequence is FEVKSGFLEK…WFGNIKALSS (111 aa). The tract at residues 577–605 is disordered; the sequence is AKSNENTTESVTPQVTNEQHTRYDDVSSS. A compositionally biased stretch (polar residues) spans 580-594; sequence NENTTESVTPQVTNE. At S626 the chain carries Phosphoserine. Positions 640 to 645 match the PXIXIT-like, required for interaction with CNA1 and CNA2, and calcineurin-dependent dephosphorylation motif; that stretch reads PEFYIE. Phosphoserine is present on residues S649 and S653.

As to quaternary structure, heterodimer of SLM1-SLM2. Binds phosphatidylinositol 4,5-bisphosphate, which is required for function. Interacts with the TORC2 subunits AVO2, BIT61 and TOR2. Interacts with the calcineurin catalytic subunits CNA1 and CNA2.

Its subcellular location is the cell membrane. In terms of biological role, together with SLM1, effector of the TORC2- and calcineurin-signaling pathways. Phosphorylated and activated by TORC2 under favorable growth conditions. Mediates actin polarization via inhibition of calcineurin-dependent transcription. Upon nutrient limitation or environmental stress, gets dephosphorylated by calcineurin, inhibiting interaction with TORC2, thereby antagonizing TORC2 signaling and mediating calcineurin-dependent actin depolarization. Also functions in heat-induced, calcineurin-mediated uracil permease (FUR4) endocytosis. In Saccharomyces cerevisiae (strain ATCC 204508 / S288c) (Baker's yeast), this protein is Phosphatidylinositol 4,5-bisphosphate-binding protein SLM2 (SLM2).